A 108-amino-acid polypeptide reads, in one-letter code: Protein translation factor SUI1 (108 aa).

The tract at residues 1–20 (MSIENLKSFDPFADTGDDEA) is disordered.

The protein belongs to the SUI1 family.

Its function is as follows. Additional factor that functions in concert with eIF-2 and the initiator tRNA in directing the ribosome to the proper start site of translation. The polypeptide is Protein translation factor SUI1 (SUI1A) (Eremothecium gossypii (strain ATCC 10895 / CBS 109.51 / FGSC 9923 / NRRL Y-1056) (Yeast)).